A 324-amino-acid polypeptide reads, in one-letter code: Hydroxyacylglutathione hydrolase 2, mitochondrial (324 aa).

The N-terminal 64 residues, 1 to 64, are a transit peptide targeting the mitochondrion; that stretch reads MQTISKASSA…KSIRVSKFCS (64 aa). Residues H124 and H126 each coordinate Zn(2+). Positions 128 and 129 each coordinate Fe cation. Residues H182 and D201 each contribute to the Zn(2+) site. Fe cation contacts are provided by D201 and H239.

The protein belongs to the metallo-beta-lactamase superfamily. Glyoxalase II family. In terms of assembly, monomer. Fe(3+) serves as cofactor. Requires Fe(2+) as cofactor. It depends on Zn(2+) as a cofactor.

The protein resides in the mitochondrion. It carries out the reaction an S-(2-hydroxyacyl)glutathione + H2O = a 2-hydroxy carboxylate + glutathione + H(+). It functions in the pathway secondary metabolite metabolism; methylglyoxal degradation; (R)-lactate from methylglyoxal: step 2/2. Functionally, thiolesterase that catalyzes the hydrolysis of S-D-lactoyl-glutathione to form glutathione and D-lactic acid. The sequence is that of Hydroxyacylglutathione hydrolase 2, mitochondrial from Arabidopsis thaliana (Mouse-ear cress).